Here is a 440-residue protein sequence, read N- to C-terminus: Chromosome partition protein MukF (440 aa).

A leucine-zipper region spans residues Leu208–Ile236.

Belongs to the MukF family. In terms of assembly, interacts, and probably forms a ternary complex, with MukE and MukB via its C-terminal region. The complex formation is stimulated by calcium or magnesium. It is required for an interaction between MukE and MukB.

The protein resides in the cytoplasm. The protein localises to the nucleoid. Its function is as follows. Involved in chromosome condensation, segregation and cell cycle progression. May participate in facilitating chromosome segregation by condensation DNA from both sides of a centrally located replisome during cell division. Not required for mini-F plasmid partitioning. Probably acts via its interaction with MukB and MukE. Overexpression results in anucleate cells. It has a calcium binding activity. This chain is Chromosome partition protein MukF, found in Escherichia coli O9:H4 (strain HS).